Reading from the N-terminus, the 224-residue chain is MPGGLLLGDEAPNFEANTTIGRIRFHDFLGDSWGILFSHPRDFTPVCTTELGRAAKLAPEFAKRNVKMIALSIDSVEDHLAWSKDINAYNGEEPKETLPFPIIDDKSRDLAIQLGMLDPAEKDEQGMPVTARVVFIFGPDKKLKLSILYPATTGRNFDEILRVIISLQLTAEKRVATPVDWKNGDSVMVLPNIPEEEAKKLFPKGVFTKELPSGKKYLRYTPQP.

The 165-residue stretch at 5-169 (LLLGDEAPNF…ILRVIISLQL (165 aa)) folds into the Thioredoxin domain. The segment at 31–40 (DSWGILFSHP) is required and sufficient for targeting to lysosomes and lamellar bodies. Thr-44 carries the phosphothreonine modification. The active-site Cysteine sulfenic acid (-SOH) intermediate; for peroxidase activity is Cys-47. At Lys-63 the chain carries N6-acetyllysine. Tyr-89 carries the phosphotyrosine modification. The For phospholipase activity role is filled by Asp-140. A Phosphothreonine; by MAPK modification is found at Thr-177. Residue Lys-209 is modified to N6-acetyllysine; alternate. Lys-209 is subject to N6-succinyllysine; alternate.

The protein belongs to the peroxiredoxin family. Prx6 subfamily. Homodimer. Interacts with GSTP1; mediates PRDX6 glutathionylation and regeneration. Interacts with APEX1. Interacts with STH. May interact with FAM168B. May interact with HTR2A. Irreversibly inactivated by overoxidation of Cys-47 to sulfinic acid (Cys-SO(2)H) and sulfonic acid (Cys-SO(3)H) forms upon oxidative stress. Post-translationally, phosphorylation at Thr-177 by MAP kinases increases the phospholipase activity of the enzyme. The phosphorylated form exhibits a greater lysophosphatidylcholine acyltransferase activity compared to the non-phosphorylated form.

The protein resides in the cytoplasm. It is found in the lysosome. The enzyme catalyses a hydroperoxide + 2 glutathione = an alcohol + glutathione disulfide + H2O. It carries out the reaction a 1,2-diacyl-sn-glycero-3-phosphocholine + H2O = a 1-acyl-sn-glycero-3-phosphocholine + a fatty acid + H(+). The catalysed reaction is a 1-acyl-sn-glycero-3-phosphocholine + an acyl-CoA = a 1,2-diacyl-sn-glycero-3-phosphocholine + CoA. It catalyses the reaction 1-hexadecanoyl-sn-glycero-3-phosphocholine + hexadecanoyl-CoA = 1,2-dihexadecanoyl-sn-glycero-3-phosphocholine + CoA. The enzyme catalyses 1,2-dihexadecanoyl-sn-glycero-3-phosphocholine + H2O = 1-hexadecanoyl-sn-glycero-3-phosphocholine + hexadecanoate + H(+). Its function is as follows. Thiol-specific peroxidase that catalyzes the reduction of hydrogen peroxide and organic hydroperoxides to water and alcohols, respectively. Can reduce H(2)O(2) and short chain organic, fatty acid, and phospholipid hydroperoxides. Also has phospholipase activity, and can therefore either reduce the oxidized sn-2 fatty acyl group of phospholipids (peroxidase activity) or hydrolyze the sn-2 ester bond of phospholipids (phospholipase activity). These activities are dependent on binding to phospholipids at acidic pH and to oxidized phospholipds at cytosolic pH. Plays a role in cell protection against oxidative stress by detoxifying peroxides and in phospholipid homeostasis. Exhibits acyl-CoA-dependent lysophospholipid acyltransferase which mediates the conversion of lysophosphatidylcholine (1-acyl-sn-glycero-3-phosphocholine or LPC) into phosphatidylcholine (1,2-diacyl-sn-glycero-3-phosphocholine or PC). Shows a clear preference for LPC as the lysophospholipid and for palmitoyl CoA as the fatty acyl substrate. This is Peroxiredoxin-6 (PRDX6) from Sus scrofa (Pig).